Here is a 92-residue protein sequence, read N- to C-terminus: Small ribosomal subunit protein bS18 (92 aa).

This sequence belongs to the bacterial ribosomal protein bS18 family. As to quaternary structure, part of the 30S ribosomal subunit. Forms a tight heterodimer with protein bS6.

Binds as a heterodimer with protein bS6 to the central domain of the 16S rRNA, where it helps stabilize the platform of the 30S subunit. The protein is Small ribosomal subunit protein bS18 of Ralstonia nicotianae (strain ATCC BAA-1114 / GMI1000) (Ralstonia solanacearum).